Here is a 248-residue protein sequence, read N- to C-terminus: Chromatin target of PRMT1 protein (248 aa).

A2 is subject to N-acetylalanine. S40, S49, and S64 each carry phosphoserine. A Glycyl lysine isopeptide (Lys-Gly) (interchain with G-Cter in SUMO2) cross-link involves residue K70. Positions 151-204 (LRRGGVRGRGGPGRGGLGRGAMGRGGIGGRGRGMIGRGRGGFGGRGRGRGRGRG) are disordered. Positions 153–206 (RGGVRGRGGPGRGGLGRGAMGRGGIGGRGRGMIGRGRGGFGGRGRGRGRGRGAL) are interaction with PRMT1. Positions 157-195 (RGRGGPGRGGLGRGAMGRGGIGGRGRGMIGRGRGGFGGR) are enriched in gly residues. The GAR motif; involved in 5hmC binding signature appears at 194-203 (GRGRGRGRGR). The residue at position 242 (T242) is a Phosphothreonine.

In terms of assembly, interacts with PRMT1 and PRMT5. Interacts with the 5FMC complex; the interaction is methylation-dependent. Interacts with FYTTD1, SET and PRC1 complex members CBX4, RNF2 and PHC2; the interactions are methylation-independent. Interacts with ZNF148. Interacts with WDR77 and ER. Asymmetrically methylated by PRMT1. Symmetrically methylated by PRMT5.

The protein localises to the nucleus. Its subcellular location is the nucleolus. It is found in the nucleoplasm. It localises to the nucleus speckle. Its function is as follows. Plays an important role in the ligand-dependent activation of estrogen receptor target genes. May play a role in the silencing of fetal globin genes. Recruits the 5FMC complex to ZNF148, leading to desumoylation of ZNF148 and subsequent transactivation of ZNF148 target genes. Required for the tumorigenicity of glioblastoma cells. Binds to 5-hydroxymethylcytosine (5hmC) and associates with the methylosome complex containing PRMT1, PRMT5, MEP50 and ERH. The CHTOP-methylosome complex associated with 5hmC methylates H4R3 and transactivates genes involved in glioblastomagenesis. This chain is Chromatin target of PRMT1 protein (CHTOP), found in Bos taurus (Bovine).